The primary structure comprises 342 residues: Succinylglutamate desuccinylase (342 aa).

The Zn(2+) site is built by histidine 63, glutamate 66, and histidine 159. Glutamate 222 is a catalytic residue.

The protein belongs to the AspA/AstE family. Succinylglutamate desuccinylase subfamily. Zn(2+) is required as a cofactor.

The enzyme catalyses N-succinyl-L-glutamate + H2O = L-glutamate + succinate. It participates in amino-acid degradation; L-arginine degradation via AST pathway; L-glutamate and succinate from L-arginine: step 5/5. Transforms N(2)-succinylglutamate into succinate and glutamate. This is Succinylglutamate desuccinylase from Paraburkholderia xenovorans (strain LB400).